A 429-amino-acid chain; its full sequence is Threonine synthase (429 aa).

Lys108 is modified (N6-(pyridoxal phosphate)lysine).

It belongs to the threonine synthase family. Pyridoxal 5'-phosphate is required as a cofactor.

The enzyme catalyses O-phospho-L-homoserine + H2O = L-threonine + phosphate. It participates in amino-acid biosynthesis; L-threonine biosynthesis; L-threonine from L-aspartate: step 5/5. Catalyzes the gamma-elimination of phosphate from L-phosphohomoserine and the beta-addition of water to produce L-threonine. This chain is Threonine synthase (thrC), found in Buchnera aphidicola subsp. Schizaphis graminum (strain Sg).